A 694-amino-acid chain; its full sequence is 4-alpha-glucanotransferase (694 aa).

It belongs to the disproportionating enzyme family.

The protein resides in the cytoplasm. It carries out the reaction Transfers a segment of a (1-&gt;4)-alpha-D-glucan to a new position in an acceptor, which may be glucose or a (1-&gt;4)-alpha-D-glucan.. In Escherichia coli (strain K12), this protein is 4-alpha-glucanotransferase (malQ).